We begin with the raw amino-acid sequence, 365 residues long: Peptide chain release factor 2 (365 aa).

Gln252 is subject to N5-methylglutamine.

It belongs to the prokaryotic/mitochondrial release factor family. Methylated by PrmC. Methylation increases the termination efficiency of RF2.

The protein localises to the cytoplasm. Functionally, peptide chain release factor 2 directs the termination of translation in response to the peptide chain termination codons UGA and UAA. The polypeptide is Peptide chain release factor 2 (Shigella flexneri).